A 209-amino-acid polypeptide reads, in one-letter code: Octanoyltransferase (209 aa).

One can recognise a BPL/LPL catalytic domain in the interval 30 to 209 (DNEPEIVYLV…IQTEFNKIFK (180 aa)). Substrate contacts are provided by residues 69–76 (RGGKFTFH), 143–145 (AIG), and 156–158 (GVA). The active-site Acyl-thioester intermediate is the Cys-174.

Belongs to the LipB family.

The protein localises to the cytoplasm. It catalyses the reaction octanoyl-[ACP] + L-lysyl-[protein] = N(6)-octanoyl-L-lysyl-[protein] + holo-[ACP] + H(+). The protein operates within protein modification; protein lipoylation via endogenous pathway; protein N(6)-(lipoyl)lysine from octanoyl-[acyl-carrier-protein]: step 1/2. In terms of biological role, catalyzes the transfer of endogenously produced octanoic acid from octanoyl-acyl-carrier-protein onto the lipoyl domains of lipoate-dependent enzymes. Lipoyl-ACP can also act as a substrate although octanoyl-ACP is likely to be the physiological substrate. The polypeptide is Octanoyltransferase (Rickettsia felis (strain ATCC VR-1525 / URRWXCal2) (Rickettsia azadi)).